Consider the following 183-residue polypeptide: Glutathione-regulated potassium-efflux system ancillary protein KefG (183 aa).

The protein belongs to the NAD(P)H dehydrogenase (quinone) family. KefG subfamily. Interacts with KefB.

The protein localises to the cell inner membrane. The enzyme catalyses a quinone + NADH + H(+) = a quinol + NAD(+). The catalysed reaction is a quinone + NADPH + H(+) = a quinol + NADP(+). Regulatory subunit of a potassium efflux system that confers protection against electrophiles. Required for full activity of KefB. This Salmonella gallinarum (strain 287/91 / NCTC 13346) protein is Glutathione-regulated potassium-efflux system ancillary protein KefG.